We begin with the raw amino-acid sequence, 432 residues long: Putative D-alanyl-D-alanine carboxypeptidase (432 aa).

Residues 7–25 traverse the membrane as a helical; Signal-anchor segment; the sequence is ATVLLTFSLSAFAVEYPVL.

It belongs to the peptidase S12 family. YfeW subfamily.

It is found in the cell inner membrane. The catalysed reaction is Preferential cleavage: (Ac)2-L-Lys-D-Ala-|-D-Ala. Also transpeptidation of peptidyl-alanyl moieties that are N-acyl substituents of D-alanine.. The sequence is that of Putative D-alanyl-D-alanine carboxypeptidase from Salmonella schwarzengrund (strain CVM19633).